The primary structure comprises 401 residues: Formate-dependent phosphoribosylglycinamide formyltransferase (401 aa).

Residues 22–23 (EL) and glutamate 82 contribute to the N(1)-(5-phospho-beta-D-ribosyl)glycinamide site. ATP contacts are provided by residues arginine 115, lysine 157, 162-167 (SSGKGQ), 197-200 (EGFV), and glutamate 205. In terms of domain architecture, ATP-grasp spans 120–315 (RLAAETLALP…EFELHARAIL (196 aa)). Residues glutamate 274 and glutamate 286 each coordinate Mg(2+). N(1)-(5-phospho-beta-D-ribosyl)glycinamide is bound by residues aspartate 293, lysine 362, and 369-370 (RR).

This sequence belongs to the PurK/PurT family. As to quaternary structure, homodimer.

The enzyme catalyses N(1)-(5-phospho-beta-D-ribosyl)glycinamide + formate + ATP = N(2)-formyl-N(1)-(5-phospho-beta-D-ribosyl)glycinamide + ADP + phosphate + H(+). The protein operates within purine metabolism; IMP biosynthesis via de novo pathway; N(2)-formyl-N(1)-(5-phospho-D-ribosyl)glycinamide from N(1)-(5-phospho-D-ribosyl)glycinamide (formate route): step 1/1. In terms of biological role, involved in the de novo purine biosynthesis. Catalyzes the transfer of formate to 5-phospho-ribosyl-glycinamide (GAR), producing 5-phospho-ribosyl-N-formylglycinamide (FGAR). Formate is provided by PurU via hydrolysis of 10-formyl-tetrahydrofolate. The protein is Formate-dependent phosphoribosylglycinamide formyltransferase of Polaromonas naphthalenivorans (strain CJ2).